We begin with the raw amino-acid sequence, 277 residues long: Insulin-induced gene 1 protein (277 aa).

At 1 to 84 the chain is on the cytoplasmic side; that stretch reads MPRLHDHFWS…PYPNTWHHRL (84 aa). Residues 51 to 66 are compositionally biased toward low complexity; the sequence is HGAPDADPAPRGRSAA. The segment at 51-73 is disordered; that stretch reads HGAPDADPAPRGRSAAMSGPEPG. A helical membrane pass occupies residues 85 to 107; it reads LQRSLVLFSVGVVLALVLNLLQI. Over 108-126 the chain is Lumenal; it reads QRNVTLFPEEVIATIFSSA. Residues 127–144 traverse the membrane as a helical segment; the sequence is WWVPPCCGTAAAVVGLLY. Residues 145–159 lie on the Cytoplasmic side of the membrane; that stretch reads PCIDSHLGEPHKFKR. Glycyl lysine isopeptide (Lys-Gly) (interchain with G-Cter in ubiquitin) cross-links involve residues Lys-156 and Lys-158. The helical transmembrane segment at 160 to 182 threads the bilayer; sequence EWASVMRCIAVFVGINHASAKLD. At 183 to 185 the chain is on the lumenal side; that stretch reads FAN. Residues 186 to 204 form a helical membrane-spanning segment; that stretch reads NVQLSLTLAALSLGLWWTF. At 205–209 the chain is on the cytoplasmic side; the sequence is DRSRS. Ser-207 carries the phosphoserine; by PCK1 modification. The helical transmembrane segment at 210-231 threads the bilayer; sequence GLGLGITIAFLATLITQFLVYN. Residues 232 to 245 are Lumenal-facing; sequence GVYQYTSPDFLYIR. The chain crosses the membrane as a helical span at residues 246-263; sequence SWLPCIFFSGGVTVGNIG. The Cytoplasmic portion of the chain corresponds to 264 to 277; sequence RQLAMGVPEKPHSD. Positions 271–277 match the KxHxx motif; it reads PEKPHSD.

The protein belongs to the INSIG family. As to quaternary structure, interacts with SCAP; interaction is direct and only takes place in the presence of sterols; it prevents interaction between SCAP and the coat protein complex II (COPII). Associates with the SCAP-SREBP complex (composed of SCAP and SREBF1/SREBP1 or SREBF2/SREBP2); association is mediated via its interaction with SCAP and only takes place in the presence of sterols. Interaction with SCAP is mutually exclusive with PAQR3. Interacts with HMGCR (via its SSD); the interaction, accelerated by sterols, leads to the recruitment of HMGCR to AMFR/gp78 for its ubiquitination by the sterol-mediated ERAD pathway. Interacts with AMFR/gp78 (via its membrane domain); the interaction recruits HMCR at the ER membrane for its ubiquitination and degradation by the sterol-mediated ERAD pathway. Interacts with SOAT2/ACAT2; leading to promote recruitment of AMFR/gp78 and subsequent ubiquitination of SOAT2/ACAT2. Interacts with RNF139. Interacts with RNF145. In terms of processing, phosphorylation at Ser-207 by PCK1 reduces binding to oxysterol, disrupting the interaction between INSIG1 and SCAP, thereby promoting nuclear translocation of SREBP proteins (SREBF1/SREBP1 or SREBF2/SREBP2) and subsequent transcription of downstream lipogenesis-related genes. Ubiquitinated by AMFR/gp78 in response to sterol deprivation, leading to its degradation: when the SCAP-SREBP complex becomes dissociated from INSIG1, INSIG1 is then ubiquitinated and degraded in proteasomes. Although ubiquitination is required for rapid INSIG1 degradation, it is not required for release of the SCAP-SREBP complex. Ubiquitinated by RNF139. Expressed in all tissues tested with highest expression in the liver.

It localises to the endoplasmic reticulum membrane. Oxysterol-binding protein that mediates feedback control of cholesterol synthesis by controlling both endoplasmic reticulum to Golgi transport of SCAP and degradation of HMGCR. Acts as a negative regulator of cholesterol biosynthesis by mediating the retention of the SCAP-SREBP complex in the endoplasmic reticulum, thereby blocking the processing of sterol regulatory element-binding proteins (SREBPs) SREBF1/SREBP1 and SREBF2/SREBP2. Binds oxysterol, including 25-hydroxycholesterol, regulating interaction with SCAP and retention of the SCAP-SREBP complex in the endoplasmic reticulum. In presence of oxysterol, interacts with SCAP, retaining the SCAP-SREBP complex in the endoplasmic reticulum, thereby preventing SCAP from escorting SREBF1/SREBP1 and SREBF2/SREBP2 to the Golgi. Sterol deprivation or phosphorylation by PCK1 reduce oxysterol-binding, disrupting the interaction between INSIG1 and SCAP, thereby promoting Golgi transport of the SCAP-SREBP complex, followed by processing and nuclear translocation of SREBF1/SREBP1 and SREBF2/SREBP2. Also regulates cholesterol synthesis by regulating degradation of HMGCR: initiates the sterol-mediated ubiquitin-mediated endoplasmic reticulum-associated degradation (ERAD) of HMGCR via recruitment of the reductase to the ubiquitin ligases AMFR/gp78 and/or RNF139. Also regulates degradation of SOAT2/ACAT2 when the lipid levels are low: initiates the ubiquitin-mediated degradation of SOAT2/ACAT2 via recruitment of the ubiquitin ligases AMFR/gp78. The polypeptide is Insulin-induced gene 1 protein (Homo sapiens (Human)).